The sequence spans 200 residues: Dephospho-CoA kinase (200 aa).

The region spanning 4 to 200 is the DPCK domain; that stretch reads VIGLTGGIAS…AILKKWNIID (197 aa). ATP is bound at residue 12–17; it reads ASGKST.

This sequence belongs to the CoaE family.

The protein localises to the cytoplasm. It catalyses the reaction 3'-dephospho-CoA + ATP = ADP + CoA + H(+). It functions in the pathway cofactor biosynthesis; coenzyme A biosynthesis; CoA from (R)-pantothenate: step 5/5. Catalyzes the phosphorylation of the 3'-hydroxyl group of dephosphocoenzyme A to form coenzyme A. The chain is Dephospho-CoA kinase from Bacillus cereus (strain ZK / E33L).